Here is a 236-residue protein sequence, read N- to C-terminus: Pyridoxine 5'-phosphate synthase (236 aa).

Asparagine 6 contacts 3-amino-2-oxopropyl phosphate. 8 to 9 provides a ligand contact to 1-deoxy-D-xylulose 5-phosphate; sequence DH. Arginine 17 provides a ligand contact to 3-amino-2-oxopropyl phosphate. Residue histidine 42 is the Proton acceptor of the active site. Arginine 44 and histidine 49 together coordinate 1-deoxy-D-xylulose 5-phosphate. The Proton acceptor role is filled by glutamate 69. Threonine 99 serves as a coordination point for 1-deoxy-D-xylulose 5-phosphate. Histidine 192 (proton donor) is an active-site residue. Residues glycine 193 and 216 to 217 contribute to the 3-amino-2-oxopropyl phosphate site; that span reads GH.

The protein belongs to the PNP synthase family. As to quaternary structure, homooctamer; tetramer of dimers.

It localises to the cytoplasm. It carries out the reaction 3-amino-2-oxopropyl phosphate + 1-deoxy-D-xylulose 5-phosphate = pyridoxine 5'-phosphate + phosphate + 2 H2O + H(+). Its pathway is cofactor biosynthesis; pyridoxine 5'-phosphate biosynthesis; pyridoxine 5'-phosphate from D-erythrose 4-phosphate: step 5/5. In terms of biological role, catalyzes the complicated ring closure reaction between the two acyclic compounds 1-deoxy-D-xylulose-5-phosphate (DXP) and 3-amino-2-oxopropyl phosphate (1-amino-acetone-3-phosphate or AAP) to form pyridoxine 5'-phosphate (PNP) and inorganic phosphate. This chain is Pyridoxine 5'-phosphate synthase, found in Aquifex pyrophilus.